A 170-amino-acid chain; its full sequence is Helix-loop-helix protein 3 (170 aa).

Low complexity predominate over residues 1 to 26 (MTASTSSTPSTSTKIPSSSKSSVTKQ). Disordered stretches follow at residues 1–42 (MTAS…VDQV) and 118–170 (TPSP…TETY). Residues 26–39 (QTKQKRNERERKRV) are basic motif; degenerate. Residues 26 to 79 (QTKQKRNERERKRVDQVNQGFVLLQERVPKAAGNKAKLSKVETLREAARYIQEL) form the bHLH domain. Basic and acidic residues predominate over residues 30 to 40 (KRNERERKRVD). Residues 40–79 (DQVNQGFVLLQERVPKAAGNKAKLSKVETLREAARYIQEL) form a helix-loop-helix motif region. The span at 143-157 (SHYYQESSSSSASTS) shows a compositional bias: low complexity.

In terms of assembly, efficient DNA binding requires dimerization with another bHLH protein. Forms a heterodimer with hlh-2. Expressed in the ADL sensory neurons.

It is found in the nucleus. In terms of biological role, probable transcriptional regulator. May mediate transcriptional activation by binding to the E-box motif 5'-CANNTG-3'. Plays a role in the differentiation of the hermaphrodite-specific motor neurons (HSN) that are required for normal egg laying. Might play a role in serotonin production by regulating expression of the tryptophan hydrolase tph-1 which catalyzes serotonin synthesis, in the HSN neurons. Also plays a role in HSN axon guidance towards the vulva and the ventral nerve cord, possibly by promoting the expression of the netrin receptor unc-40. Under feeding conditions, involved in the regulation of the srh-234 chemoreceptor encoding gene expression in the ADL sensory neurons. Together with hlh-2, involved in the induction of programmed cell death in the sister cells of the serotonergic neurosecretory motor (NSM) neurons, probably through the activation of egl-1 transcription. The sequence is that of Helix-loop-helix protein 3 from Caenorhabditis elegans.